The chain runs to 285 residues: Energy-coupling factor transporter ATP-binding protein EcfA1 (285 aa).

Positions 9 to 246 (VTVEHLSFTY…VSLIKNAGLD (238 aa)) constitute an ABC transporter domain. ATP is bound at residue 43 to 50 (GHNGSGKS).

This sequence belongs to the ABC transporter superfamily. Energy-coupling factor EcfA family. Forms a stable energy-coupling factor (ECF) transporter complex composed of 2 membrane-embedded substrate-binding proteins (S component), 2 ATP-binding proteins (A component) and 2 transmembrane proteins (T component).

It is found in the cell membrane. In terms of biological role, ATP-binding (A) component of a common energy-coupling factor (ECF) ABC-transporter complex. Unlike classic ABC transporters this ECF transporter provides the energy necessary to transport a number of different substrates. The sequence is that of Energy-coupling factor transporter ATP-binding protein EcfA1 from Lactobacillus gasseri (strain ATCC 33323 / DSM 20243 / BCRC 14619 / CIP 102991 / JCM 1131 / KCTC 3163 / NCIMB 11718 / NCTC 13722 / AM63).